The sequence spans 255 residues: Acetylglutamate kinase (255 aa).

Substrate contacts are provided by residues G40–G41, R62, and N157.

This sequence belongs to the acetylglutamate kinase family. ArgB subfamily.

The protein resides in the cytoplasm. It carries out the reaction N-acetyl-L-glutamate + ATP = N-acetyl-L-glutamyl 5-phosphate + ADP. The protein operates within amino-acid biosynthesis; L-arginine biosynthesis; N(2)-acetyl-L-ornithine from L-glutamate: step 2/4. Functionally, catalyzes the ATP-dependent phosphorylation of N-acetyl-L-glutamate. In Parabacteroides distasonis (strain ATCC 8503 / DSM 20701 / CIP 104284 / JCM 5825 / NCTC 11152), this protein is Acetylglutamate kinase.